We begin with the raw amino-acid sequence, 290 residues long: ATP synthase subunit a (290 aa).

The next 7 membrane-spanning stretches (helical) occupy residues Ala-54 to Phe-74, Ile-115 to Ile-135, Pro-136 to Pro-156, Phe-164 to Phe-184, Leu-201 to Ala-221, Val-233 to Trp-253, and Ala-254 to Val-274.

The protein belongs to the ATPase A chain family. In terms of assembly, F-type ATPases have 2 components, CF(1) - the catalytic core - and CF(0) - the membrane proton channel. CF(1) has five subunits: alpha(3), beta(3), gamma(1), delta(1), epsilon(1). CF(0) has three main subunits: a(1), b(2) and c(9-12). The alpha and beta chains form an alternating ring which encloses part of the gamma chain. CF(1) is attached to CF(0) by a central stalk formed by the gamma and epsilon chains, while a peripheral stalk is formed by the delta and b chains.

It is found in the cell inner membrane. In terms of biological role, key component of the proton channel; it plays a direct role in the translocation of protons across the membrane. This chain is ATP synthase subunit a, found in Stutzerimonas stutzeri (strain A1501) (Pseudomonas stutzeri).